A 459-amino-acid polypeptide reads, in one-letter code: 5-hydroxytryptamine receptor 2C (459 aa).

A signal peptide spans 1–32; sequence MVNLGTAVRSLLVHLIGLLVWQFDISISPVAA. Topologically, residues 33-56 are extracellular; it reads IVTDTFNSSDGGRLFQFPDGVQNW. A helical membrane pass occupies residues 57–81; that stretch reads PALSIVVIIIMTIGGNILVIMAVSM. Residues 82-87 are Cytoplasmic-facing; the sequence is EKKLHN. The chain crosses the membrane as a helical span at residues 88 to 112; that stretch reads ATNYFLMSLAIADMLVGLLVMPLSL. Residues 113–129 are Extracellular-facing; the sequence is LAILYDYVWPLPRYLCP. Cys128 and Cys208 are disulfide-bonded. Residues 130–152 traverse the membrane as a helical segment; it reads VWISLDVLFSTASIMHLCAISLD. Residue Thr140 coordinates ergotamine. The DRY motif; important for ligand-induced conformation changes motif lies at 152-154; that stretch reads DRY. The Cytoplasmic segment spans residues 153–168; sequence RYVAIRNPIEHSRFNS. The helical transmembrane segment at 169 to 190 threads the bilayer; the sequence is RTKAIMKIAIVWAISIGVSVPI. Over 191 to 214 the chain is Extracellular; the sequence is PVIGLRDESKVFVNNTTCVLNDPN. N-linked (GlcNAc...) asparagine glycosylation is found at Asn204 and Asn205. Residue Leu210 coordinates ergotamine. Residues 215–237 traverse the membrane as a helical segment; the sequence is FVLIGSFVAFFIPLTIMVITYFL. Residues 238–312 are Cytoplasmic-facing; the sequence is TIYVLRRQTL…AINNEKKASK (75 aa). Residues 274–302 are disordered; that stretch reads DEEENAPNPNPDQKPRRKKKEKRPRGTMQ. Residues 288 to 298 are compositionally biased toward basic residues; the sequence is PRRKKKEKRPR. Residues 313–337 form a helical membrane-spanning segment; that stretch reads VLGIVFFVFLIMWCPFFITNILSVL. A disulfide bridge connects residues Cys338 and Cys342. Residues 338–348 lie on the Extracellular side of the membrane; it reads CGKACNQKLME. Residues 349 to 371 traverse the membrane as a helical segment; it reads KLLNVFVWIGYVCSGINPLVYTL. An NPxxY motif; important for ligand-induced conformation changes and signaling motif is present at residues 365–369; it reads NPLVY. Topologically, residues 372–459 are cytoplasmic; sequence FNKIYRRAFS…NVVSERISSV (88 aa). The PDZ-binding motif lies at 457–459; the sequence is SSV.

This sequence belongs to the G-protein coupled receptor 1 family. In terms of assembly, interacts with MPDZ. Interacts with ARRB2. Interacts with MPP3; this interaction stabilizes the receptor at the plasma membrane and prevents the desensitization of the HTR2C receptor-mediated calcium response. Detected in brain cortex, hypothalamus, brainstem and arcuate nucleus. Detected in the paraventricular nucleus of the hypothalamus.

The protein resides in the cell membrane. G-protein coupled receptor for 5-hydroxytryptamine (serotonin). Also functions as a receptor for various drugs and psychoactive substances, including ergot alkaloid derivatives, 1-2,5,-dimethoxy-4-iodophenyl-2-aminopropane (DOI) and lysergic acid diethylamide (LSD). Ligand binding causes a conformation change that triggers signaling via guanine nucleotide-binding proteins (G proteins) and modulates the activity of downstream effectors. HTR2C is coupled to G(q)/G(11) G alpha proteins and activates phospholipase C-beta, releasing diacylglycerol (DAG) and inositol 1,4,5-trisphosphate (IP3) second messengers that modulate the activity of phosphatidylinositol 3-kinase and promote the release of Ca(2+) ions from intracellular stores, respectively. Beta-arrestin family members inhibit signaling via G proteins and mediate activation of alternative signaling pathways. Regulates neuronal activity via the activation of short transient receptor potential calcium channels in the brain, and thereby modulates the activation of pro-opiomelanocortin neurons and the release of CRH that then regulates the release of corticosterone. Plays a role in the regulation of appetite and eating behavior, responses to anxiogenic stimuli and stress. Plays a role in insulin sensitivity and glucose homeostasis. This is 5-hydroxytryptamine receptor 2C from Mus musculus (Mouse).